A 545-amino-acid chain; its full sequence is Zinc finger protein with KRAB and SCAN domains 4 (545 aa).

The interval 1 to 22 is disordered; that stretch reads MAREPRKNAALDAQSAEDQTGL. Glycyl lysine isopeptide (Lys-Gly) (interchain with G-Cter in SUMO2) cross-links involve residues K26 and K29. The disordered stretch occupies residues 34–55; it reads ALTAEVRAPCSPARGPERSRQR. Residues 53–135 form the SCAN box domain; the sequence is RQRFRGFRYP…VLLEYLERQL (83 aa). Residues K178 and K222 each participate in a glycyl lysine isopeptide (Lys-Gly) (interchain with G-Cter in SUMO2) cross-link. The KRAB domain maps to 221–317; the sequence is LKMEDVALTL…QRKQKNAIGS (97 aa). C2H2-type zinc fingers lie at residues 320–342, 348–370, 376–398, 404–426, and 432–454; these read HYCH…RRIH, YECE…QRVH, YECE…QRTH, YECD…HKIH, and YQCN…QRIH. Residues 455–467 show a composition bias toward basic and acidic residues; the sequence is GDKNVQNPEHGES. The segment at 455 to 480 is disordered; it reads GDKNVQNPEHGESWESQGRTESQWEN. Positions 468-480 are enriched in polar residues; that stretch reads WESQGRTESQWEN. 2 consecutive C2H2-type zinc fingers follow at residues 487-509 and 515-537; these read YKCN…QKIH and YQCD…QRSH.

This sequence belongs to the krueppel C2H2-type zinc-finger protein family. Expressed in adult heart, brain, placenta, lung and kidney, but not in adult liver and skeletal muscle. In 17-day old embryo, detected in liver, skeletal muscle, brain, heart and small intestine.

Its subcellular location is the nucleus. In terms of biological role, may be involved in the transcriptional activation of MDM2 and EP300 genes. This Homo sapiens (Human) protein is Zinc finger protein with KRAB and SCAN domains 4 (ZKSCAN4).